We begin with the raw amino-acid sequence, 311 residues long: Sulfate adenylyltransferase subunit 2 (311 aa).

Belongs to the PAPS reductase family. CysD subfamily. In terms of assembly, heterodimer composed of CysD, the smaller subunit, and CysN.

It carries out the reaction sulfate + ATP + H(+) = adenosine 5'-phosphosulfate + diphosphate. Its pathway is sulfur metabolism; hydrogen sulfide biosynthesis; sulfite from sulfate: step 1/3. In terms of biological role, with CysN forms the ATP sulfurylase (ATPS) that catalyzes the adenylation of sulfate producing adenosine 5'-phosphosulfate (APS) and diphosphate, the first enzymatic step in sulfur assimilation pathway. APS synthesis involves the formation of a high-energy phosphoric-sulfuric acid anhydride bond driven by GTP hydrolysis by CysN coupled to ATP hydrolysis by CysD. The sequence is that of Sulfate adenylyltransferase subunit 2 from Caulobacter vibrioides (strain ATCC 19089 / CIP 103742 / CB 15) (Caulobacter crescentus).